Reading from the N-terminus, the 198-residue chain is Transcription factor elt-7 (198 aa).

Over residues methionine 1–methionine 18 the composition is skewed to polar residues. The tract at residues methionine 1–glutamate 20 is disordered. The segment at cysteine 143 to cysteine 167 adopts a GATA-type zinc-finger fold.

Its subcellular location is the nucleus. Its function is as follows. Transcriptional activator that binds to the consensus sequence 5'-[AT]GATA[AG]-3'. Required for gut-specific differentiation, specifically acting with the GATA region-binding transcription factor elt-2 to control normal gene expression and promote normal formation of the intestine. May have a protective role in response to infection by Gram-negative bacteria such as P.aeruginosa. The protein is Transcription factor elt-7 of Caenorhabditis elegans.